Consider the following 395-residue polypeptide: Argininosuccinate synthase (395 aa).

7-15 (LYSGGLDTS) contributes to the ATP binding site. An L-citrulline-binding site is contributed by Y83. ATP is bound at residue G113. L-aspartate-binding residues include T115, N119, and D120. N119 contributes to the L-citrulline binding site. Positions 123, 169, 178, 253, and 265 each coordinate L-citrulline.

Belongs to the argininosuccinate synthase family. Type 1 subfamily. As to quaternary structure, homotetramer.

It localises to the cytoplasm. It carries out the reaction L-citrulline + L-aspartate + ATP = 2-(N(omega)-L-arginino)succinate + AMP + diphosphate + H(+). It participates in amino-acid biosynthesis; L-arginine biosynthesis; L-arginine from L-ornithine and carbamoyl phosphate: step 2/3. The sequence is that of Argininosuccinate synthase from Picrophilus torridus (strain ATCC 700027 / DSM 9790 / JCM 10055 / NBRC 100828 / KAW 2/3).